The sequence spans 215 residues: Uridine kinase (215 aa).

ATP is bound at residue 16–23; the sequence is GASASGKS.

The protein belongs to the uridine kinase family.

The protein localises to the cytoplasm. It carries out the reaction uridine + ATP = UMP + ADP + H(+). The enzyme catalyses cytidine + ATP = CMP + ADP + H(+). Its pathway is pyrimidine metabolism; CTP biosynthesis via salvage pathway; CTP from cytidine: step 1/3. It functions in the pathway pyrimidine metabolism; UMP biosynthesis via salvage pathway; UMP from uridine: step 1/1. The sequence is that of Uridine kinase from Aliivibrio salmonicida (strain LFI1238) (Vibrio salmonicida (strain LFI1238)).